Consider the following 218-residue polypeptide: Glutathione S-transferase Mu 2 (218 aa).

The GST N-terminal domain occupies Pro-2–Gly-88. Residue Tyr-7–Trp-8 coordinates glutathione. A phosphoserine mark is found at Ser-27 and Ser-44. Glutathione is bound by residues Arg-43–Trp-46, Lys-50, Asn-59–Leu-60, and Gln-72–Ser-73. The 119-residue stretch at Thr-90–Ile-208 folds into the GST C-terminal domain. Position 116 (Tyr-116) interacts with substrate. Ser-117 is subject to Phosphoserine.

Belongs to the GST superfamily. Mu family. As to quaternary structure, homodimer.

It localises to the cytoplasm. It catalyses the reaction RX + glutathione = an S-substituted glutathione + a halide anion + H(+). The catalysed reaction is 11(S)-hydroxy-14(S),15(S)-epoxy-(5Z,8Z,12E)-eicosatrienoate + glutathione = (11S,15S)-dihydroxy-14(R)-S-glutathionyl-(5Z,8Z,12E)-eicosatrienoate. Functionally, conjugation of reduced glutathione to a wide number of exogenous and endogenous hydrophobic electrophiles. Participates in the formation of novel hepoxilin regioisomers. This is Glutathione S-transferase Mu 2 from Mus musculus (Mouse).